A 509-amino-acid polypeptide reads, in one-letter code: O-acetyltransferase anaAT (509 aa).

It belongs to the fumigaclavine B O-acetyltransferase family. In terms of assembly, monomer.

It carries out the reaction (2R,3S,11R)-aszonalenin + acetyl-CoA = (2R,3S,11R)-acetylaszonalenin + CoA. The protein operates within alkaloid biosynthesis. In terms of biological role, O-acetyltransferase; part of the gene cluster that mediates the biosynthesis of the prenylated pyrroloindoline diketopiperazine acetylaszonalenin. The first step in the pathway is the formation of (R)-benzodiazepinedione by condensation of tryptophan and anthranilic acid catalyzed by the non-ribosomal peptide synthetase anaPS. The prenyltransferase anaPT then converts (R)-benzodiazepinedione to aszonalenin in the presence of dimethylallyl diphosphate (DMAPP) via C3-prenylation. The last step in the biosynthesis of acetylaszonalenin via acetylation of aszonalenin at position N1 catalyzed by anaAT. The chain is O-acetyltransferase anaAT from Neosartorya fischeri (strain ATCC 1020 / DSM 3700 / CBS 544.65 / FGSC A1164 / JCM 1740 / NRRL 181 / WB 181) (Aspergillus fischerianus).